We begin with the raw amino-acid sequence, 284 residues long: D-tagatose-1,6-bisphosphate aldolase subunit GatY (284 aa).

Catalysis depends on Asp82, which acts as the Proton donor. Positions 83 and 180 each coordinate Zn(2+). Gly181 provides a ligand contact to dihydroxyacetone phosphate. His208 contributes to the Zn(2+) binding site. Residues 209 to 211 (GAS) and 230 to 233 (NVAT) each bind dihydroxyacetone phosphate.

The protein belongs to the class II fructose-bisphosphate aldolase family. TagBP aldolase GatY subfamily. As to quaternary structure, forms a complex with GatZ. Zn(2+) serves as cofactor.

It catalyses the reaction D-tagatofuranose 1,6-bisphosphate = D-glyceraldehyde 3-phosphate + dihydroxyacetone phosphate. It participates in carbohydrate metabolism; D-tagatose 6-phosphate degradation; D-glyceraldehyde 3-phosphate and glycerone phosphate from D-tagatose 6-phosphate: step 2/2. In terms of biological role, catalytic subunit of the tagatose-1,6-bisphosphate aldolase GatYZ, which catalyzes the reversible aldol condensation of dihydroxyacetone phosphate (DHAP or glycerone-phosphate) with glyceraldehyde 3-phosphate (G3P) to produce tagatose 1,6-bisphosphate (TBP). Requires GatZ subunit for full activity and stability. Is involved in the catabolism of galactitol. This chain is D-tagatose-1,6-bisphosphate aldolase subunit GatY, found in Escherichia coli O6:K15:H31 (strain 536 / UPEC).